The chain runs to 193 residues: Surfactant protein C (193 aa).

Residues 1–23 (MDMSSKEVLMESPPDYSAGPRSQ) constitute a propeptide that is removed on maturation. S-palmitoyl cysteine attachment occurs at residues cysteine 28 and cysteine 29. A propeptide spanning residues 59–193 (HMSQKHTEMV…LCGELPLYYI (135 aa)) is cleaved from the precursor. The 100-residue stretch at 94 to 193 (FSIGSTGIVV…LCGELPLYYI (100 aa)) folds into the BRICHOS domain. A disulfide bond links cysteine 121 and cysteine 185. The interval 147 to 170 (KPSTPTSKLGQEEGHDTGSESDSS) is disordered.

Its subcellular location is the secreted. It is found in the extracellular space. It localises to the surface film. Functionally, pulmonary surfactant associated proteins promote alveolar stability by lowering the surface tension at the air-liquid interface in the peripheral air spaces. The sequence is that of Surfactant protein C from Mus musculus (Mouse).